The following is a 533-amino-acid chain: Lysophosphatidylcholine acyltransferase (533 aa).

At 1 to 79 the chain is on the cytoplasmic side; that stretch reads MTTSTIKPTG…VLTVLLLPIR (79 aa). Residues 80 to 100 form a helical; Signal-anchor for type II membrane protein membrane-spanning segment; sequence VVGCVLSLISAWMFACIGLYG. The Lumenal portion of the chain corresponds to 101 to 533; that stretch reads MTLDDLKAKP…PKAVVTTAEN (433 aa). An HXXXXD motif motif is present at residues 158–163; that stretch reads HSSYVD. 3 EF-hand domains span residues 402 to 437, 439 to 474, and 475 to 510; these read LKNT…CKLK, SDLL…AGGK, and LNEQ…QKSS.

The protein belongs to the 1-acyl-sn-glycerol-3-phosphate acyltransferase family.

The protein localises to the endoplasmic reticulum membrane. It is found in the golgi apparatus membrane. Its subcellular location is the lipid droplet. It carries out the reaction a 1-acyl-sn-glycero-3-phosphocholine + an acyl-CoA = a 1,2-diacyl-sn-glycero-3-phosphocholine + CoA. It participates in lipid metabolism; phospholipid metabolism. Functionally, acetyltransferase which mediates the conversion of 1-acyl-sn-glycero-3-phosphocholine (LPC) into phosphatidylcholine (PC). Has a calcium-independent activity. Displays a clear preference for saturated fatty acyl-CoAs, and 1-myristoyl or 1-palmitoyl LPC as acyl donors and acceptors, respectively. Involved in the regulation of lipid droplet number and size. This is Lysophosphatidylcholine acyltransferase from Drosophila melanogaster (Fruit fly).